Reading from the N-terminus, the 509-residue chain is Heat shock 70 kDa protein 14 (509 aa).

It belongs to the heat shock protein 70 family. In terms of assembly, component of ribosome-associated complex (RAC), a heterodimer composed of Hsp70/DnaK-type chaperone HSPA14 and Hsp40/DnaJ-type chaperone DNAJC2.

The protein localises to the cytoplasm. The protein resides in the cytosol. Its function is as follows. Component of the ribosome-associated complex (RAC), a complex involved in folding or maintaining nascent polypeptides in a folding-competent state. In the RAC complex, binds to the nascent polypeptide chain, while DNAJC2 stimulates its ATPase activity. This Rattus norvegicus (Rat) protein is Heat shock 70 kDa protein 14 (Hspa14).